The chain runs to 432 residues: Tol-Pal system protein TolB (432 aa).

The first 21 residues, 1-21 (MKKVIYTIVGFVFMWSTSVYA), serve as a signal peptide directing secretion.

This sequence belongs to the TolB family. In terms of assembly, the Tol-Pal system is composed of five core proteins: the inner membrane proteins TolA, TolQ and TolR, the periplasmic protein TolB and the outer membrane protein Pal. They form a network linking the inner and outer membranes and the peptidoglycan layer.

The protein resides in the periplasm. Functionally, part of the Tol-Pal system, which plays a role in outer membrane invagination during cell division and is important for maintaining outer membrane integrity. This Hydrogenovibrio crunogenus (strain DSM 25203 / XCL-2) (Thiomicrospira crunogena) protein is Tol-Pal system protein TolB.